The following is a 610-amino-acid chain: DNA mismatch repair protein MutL (610 aa).

The protein belongs to the DNA mismatch repair MutL/HexB family.

In terms of biological role, this protein is involved in the repair of mismatches in DNA. It is required for dam-dependent methyl-directed DNA mismatch repair. May act as a 'molecular matchmaker', a protein that promotes the formation of a stable complex between two or more DNA-binding proteins in an ATP-dependent manner without itself being part of a final effector complex. The chain is DNA mismatch repair protein MutL from Rickettsia rickettsii (strain Iowa).